The sequence spans 450 residues: Salicylate synthase (450 aa).

The active-site Proton donor is glutamate 252. Residue 270 to 271 (GT) participates in substrate binding. Glutamate 297 is a binding site for Mg(2+). Substrate-binding positions include tyrosine 385, arginine 405, and 419 to 421 (GAG). The Mg(2+) site is built by glutamate 431 and glutamate 434. A substrate-binding site is contributed by lysine 438.

It belongs to the anthranilate synthase component I family. Salicylate synthase subfamily. As to quaternary structure, monomer. Mg(2+) serves as cofactor.

It catalyses the reaction chorismate = isochorismate. The catalysed reaction is isochorismate = salicylate + pyruvate. It carries out the reaction chorismate = prephenate. Its pathway is siderophore biosynthesis; mycobactin biosynthesis. Functionally, involved in the incorporation of salicylate into the virulence-conferring salicylate-based siderophore mycobactin. Catalyzes the initial conversion of chorismate to yield the intermediate isochorismate (isochorismate synthase activity), and the subsequent elimination of the enolpyruvyl side chain in a lyase reaction to give salicylate (isochorismate pyruvate-lyase activity). In the absence of magnesium, MbtI displays a chorismate mutase activity and converts chorismate to prephenate. The polypeptide is Salicylate synthase (mbtI) (Mycolicibacterium paratuberculosis (strain ATCC BAA-968 / K-10) (Mycobacterium paratuberculosis)).